Consider the following 241-residue polypeptide: tRNA pseudouridine synthase A (241 aa).

Catalysis depends on aspartate 52, which acts as the Nucleophile. Tyrosine 110 provides a ligand contact to substrate.

Belongs to the tRNA pseudouridine synthase TruA family. As to quaternary structure, homodimer.

The enzyme catalyses uridine(38/39/40) in tRNA = pseudouridine(38/39/40) in tRNA. Functionally, formation of pseudouridine at positions 38, 39 and 40 in the anticodon stem and loop of transfer RNAs. The sequence is that of tRNA pseudouridine synthase A from Aquifex aeolicus (strain VF5).